A 388-amino-acid chain; its full sequence is FMRFamide neuropeptides (388 aa).

The signal sequence occupies residues 1–21 (MVAPLLVFLFSLQLCHTTSWA). Residues 22–172 (YVGGNSLNSN…SNHQVIRDSR (151 aa)) constitute a propeptide that is removed on maturation. The interval 40-74 (FPAGTSNEVPEDAANGQDDNDDSQLTEPNDNNAPL) is disordered. Residues 64 to 74 (LTEPNDNNAPL) are compositionally biased toward polar residues. A phenylalanine amide mark is found at F179, F196, F208, F219, F230, F241, F253, F265, F277, F289, F301, F313, F325, F337, F346, F359, and F372. The segment at 360-388 (GRTPTQSSDFMRFGKSLDKSENKTSDLQK) is disordered. Over residues 374–388 (KSLDKSENKTSDLQK) the composition is skewed to basic and acidic residues. Residues 375–388 (SLDKSENKTSDLQK) constitute a propeptide that is removed on maturation.

Belongs to the FARP (FMRFamide related peptide) family. As to expression, in the brain, expressed in 2 large cells in the lateral neurons in each optic lobe, 2 slightly bigger cells on both sides of the tritocerebrum, around 14 small cells in the dorsal area, around 13 cells in the subesophageal ganglion, and in the central brain.

The protein localises to the secreted. This is FMRFamide neuropeptides from Musca domestica (House fly).